Reading from the N-terminus, the 903-residue chain is Valine--tRNA ligase (903 aa).

Residues 1–15 are compositionally biased toward polar residues; sequence MVCVTDQNNENPSQN. Residues 1 to 22 are disordered; the sequence is MVCVTDQNNENPSQNRADKLPK. The 'HIGH' region motif lies at 61–71; the sequence is PNVTGQLHMGH. A 'KMSKS' region motif is present at residues 552–556; that stretch reads KMSKS. K555 is a binding site for ATP. Residues 836–902 adopt a coiled-coil conformation; the sequence is TVDVAAERKR…ERITKRLEEL (67 aa).

Belongs to the class-I aminoacyl-tRNA synthetase family. ValS type 1 subfamily. In terms of assembly, monomer.

Its subcellular location is the cytoplasm. It carries out the reaction tRNA(Val) + L-valine + ATP = L-valyl-tRNA(Val) + AMP + diphosphate. Catalyzes the attachment of valine to tRNA(Val). As ValRS can inadvertently accommodate and process structurally similar amino acids such as threonine, to avoid such errors, it has a 'posttransfer' editing activity that hydrolyzes mischarged Thr-tRNA(Val) in a tRNA-dependent manner. This is Valine--tRNA ligase from Corynebacterium efficiens (strain DSM 44549 / YS-314 / AJ 12310 / JCM 11189 / NBRC 100395).